Reading from the N-terminus, the 618-residue chain is V-type proton ATPase catalytic subunit A (618 aa).

251–258 (GAFGCGKT) serves as a coordination point for ATP.

This sequence belongs to the ATPase alpha/beta chains family. As to quaternary structure, V-ATPase is a heteromultimeric enzyme composed of a peripheral catalytic V1 complex (main components: subunits A, B, C, D, E, and F) attached to an integral membrane V0 proton pore complex (main component: the proteolipid protein).

The catalysed reaction is ATP + H2O + 4 H(+)(in) = ADP + phosphate + 5 H(+)(out). Functionally, catalytic subunit of the peripheral V1 complex of vacuolar ATPase. V-ATPase vacuolar ATPase is responsible for acidifying a variety of intracellular compartments in eukaryotic cells. The polypeptide is V-type proton ATPase catalytic subunit A (vatA) (Dictyostelium discoideum (Social amoeba)).